Consider the following 367-residue polypeptide: Phospho-N-acetylmuramoyl-pentapeptide-transferase (367 aa).

Transmembrane regions (helical) follow at residues 16 to 36 (LLLA…WVRF), 62 to 82 (TMGG…FNLV), 87 to 107 (MLLP…DDWL), 125 to 145 (FWIM…PQPY), 158 to 178 (VGEV…IVFI), 190 to 210 (SLAG…TFLA), 214 to 234 (LTNL…FLWY), 240 to 260 (QVFM…VVAL), 264 to 284 (QWLL…STMI), and 326 to 346 (FVLI…IFGP).

Belongs to the glycosyltransferase 4 family. MraY subfamily. Mg(2+) is required as a cofactor.

It localises to the cell membrane. It carries out the reaction UDP-N-acetyl-alpha-D-muramoyl-L-alanyl-gamma-D-glutamyl-meso-2,6-diaminopimeloyl-D-alanyl-D-alanine + di-trans,octa-cis-undecaprenyl phosphate = di-trans,octa-cis-undecaprenyl diphospho-N-acetyl-alpha-D-muramoyl-L-alanyl-D-glutamyl-meso-2,6-diaminopimeloyl-D-alanyl-D-alanine + UMP. It functions in the pathway cell wall biogenesis; peptidoglycan biosynthesis. Its function is as follows. Catalyzes the initial step of the lipid cycle reactions in the biosynthesis of the cell wall peptidoglycan: transfers peptidoglycan precursor phospho-MurNAc-pentapeptide from UDP-MurNAc-pentapeptide onto the lipid carrier undecaprenyl phosphate, yielding undecaprenyl-pyrophosphoryl-MurNAc-pentapeptide, known as lipid I. The polypeptide is Phospho-N-acetylmuramoyl-pentapeptide-transferase (Chloroflexus aurantiacus (strain ATCC 29366 / DSM 635 / J-10-fl)).